The following is a 329-amino-acid chain: ATP-dependent (S)-NAD(P)H-hydrate dehydratase (329 aa).

The 292-residue stretch at 35–326 folds into the YjeF C-terminal domain; that stretch reads TLQLVRNIIP…AEVGAAFSKL (292 aa). Residue Tyr67 is modified to Phosphotyrosine. Residues Gly135 and 188–194 each bind (6S)-NADPHX; that span reads NHMEFSR. 2 N-linked (GlcNAc...) asparagine glycosylation sites follow: Asn207 and Asn222. ATP-binding positions include 228-232 and 247-256; these read KGERD and GSSRRCGGQG. Position 257 (Asp257) interacts with (6S)-NADPHX. Asn279 carries an N-linked (GlcNAc...) asparagine glycan.

The protein belongs to the NnrD/CARKD family. Mg(2+) is required as a cofactor.

It is found in the mitochondrion. It carries out the reaction (6S)-NADHX + ATP = ADP + phosphate + NADH + H(+). The catalysed reaction is (6S)-NADPHX + ATP = ADP + phosphate + NADPH + H(+). Its function is as follows. Catalyzes the dehydration of the S-form of NAD(P)HX at the expense of ATP, which is converted to ADP. Together with NAD(P)HX epimerase, which catalyzes the epimerization of the S- and R-forms, the enzyme allows the repair of both epimers of NAD(P)HX, a damaged form of NAD(P)H that is a result of enzymatic or heat-dependent hydration. The chain is ATP-dependent (S)-NAD(P)H-hydrate dehydratase from Pongo abelii (Sumatran orangutan).